A 450-amino-acid chain; its full sequence is Phosphoglucosamine mutase (450 aa).

The active-site Phosphoserine intermediate is the Ser107. The Mg(2+) site is built by Ser107, Asp246, Asp248, and Asp250. Residue Ser107 is modified to Phosphoserine.

It belongs to the phosphohexose mutase family. It depends on Mg(2+) as a cofactor. Activated by phosphorylation.

It catalyses the reaction alpha-D-glucosamine 1-phosphate = D-glucosamine 6-phosphate. Its function is as follows. Catalyzes the conversion of glucosamine-6-phosphate to glucosamine-1-phosphate. The chain is Phosphoglucosamine mutase from Dechloromonas aromatica (strain RCB).